We begin with the raw amino-acid sequence, 535 residues long: F-box protein At1g56610 (535 aa).

The next 3 helical transmembrane spans lie at 3–23, 37–57, and 82–102; these read FALV…SSSI, VLLL…LCLF, and LAPH…SLLF. The F-box; degenerate domain occupies 73–119; sequence TELCDLPKCLAPHILSWLPTKTAVTVSLLFMKGWWRSEMKNLSSLKF.

As to quaternary structure, part of a SCF (ASK-cullin-F-box) protein ligase complex. Interacts with ASK4.

The protein resides in the membrane. It functions in the pathway protein modification; protein ubiquitination. In terms of biological role, component of SCF(ASK-cullin-F-box) E3 ubiquitin ligase complexes, which may mediate the ubiquitination and subsequent proteasomal degradation of target proteins. This chain is F-box protein At1g56610, found in Arabidopsis thaliana (Mouse-ear cress).